The chain runs to 581 residues: Proline--tRNA ligase (581 aa).

The protein belongs to the class-II aminoacyl-tRNA synthetase family. ProS type 1 subfamily. Homodimer.

Its subcellular location is the cytoplasm. It carries out the reaction tRNA(Pro) + L-proline + ATP = L-prolyl-tRNA(Pro) + AMP + diphosphate. Its function is as follows. Catalyzes the attachment of proline to tRNA(Pro) in a two-step reaction: proline is first activated by ATP to form Pro-AMP and then transferred to the acceptor end of tRNA(Pro). As ProRS can inadvertently accommodate and process non-cognate amino acids such as alanine and cysteine, to avoid such errors it has two additional distinct editing activities against alanine. One activity is designated as 'pretransfer' editing and involves the tRNA(Pro)-independent hydrolysis of activated Ala-AMP. The other activity is designated 'posttransfer' editing and involves deacylation of mischarged Ala-tRNA(Pro). The misacylated Cys-tRNA(Pro) is not edited by ProRS. In Rhodococcus opacus (strain B4), this protein is Proline--tRNA ligase.